The sequence spans 326 residues: Probable cell division protein WhiA (326 aa).

The segment at residues 275–308 is a DNA-binding region (H-T-H motif); the sequence is SLDELGRLADPVMTKDAIAGRIRRLLAMADKRAL.

It belongs to the WhiA family.

Its function is as follows. Involved in cell division and chromosome segregation. The sequence is that of Probable cell division protein WhiA from Pseudarthrobacter chlorophenolicus (strain ATCC 700700 / DSM 12829 / CIP 107037 / JCM 12360 / KCTC 9906 / NCIMB 13794 / A6) (Arthrobacter chlorophenolicus).